A 329-amino-acid chain; its full sequence is Src kinase-associated phosphoprotein 2 (329 aa).

Residues 58 to 95 (YAEDSEEEEDWDSNEGGSLQSERTDKDEEACEGAQQAP) form a disordered region. Residues 61 to 70 (DSEEEEDWDS) show a composition bias toward acidic residues. The 104-residue stretch at 104–207 (SVFKAGYLEK…WVKQIDFVLK (104 aa)) folds into the PH domain. The segment at 240–263 (EDMPSPPPKVEPVSKHPPPTPAVD) is disordered. Positions 243-260 (PSPPPKVEPVSKHPPPTP) are enriched in pro residues. One can recognise an SH3 domain in the interval 267–328 (DYANYYQGLW…PKDYLMELYA (62 aa)).

The protein belongs to the SKAP family. In terms of processing, phosphorylated on tyrosines.

The protein resides in the cytoplasm. In terms of biological role, may be involved in B-cell and macrophage adhesion processes. May play a role in src signaling pathway. This Takifugu rubripes (Japanese pufferfish) protein is Src kinase-associated phosphoprotein 2 (skap2).